The sequence spans 418 residues: MAP kinase-interacting serine/threonine-protein kinase 1 (418 aa).

Positions 1–23 are disordered; it reads MVSSQPVPFDDGGKRRKKKRKTR. A Protein kinase domain is found at 37-321; sequence RLTDELLGEG…AFQVLQHPWL (285 aa). ATP is bound by residues 43–51 and Lys66; that span reads LGEGAYAKV. Asp158 functions as the Proton acceptor in the catalytic mechanism. The interval 384–418 is disordered; the sequence is PPSKSRLAKRRAQAHARKGGSHPTHSTVTASQGTP. Residues 389-403 are compositionally biased toward basic residues; it reads RLAKRRAQAHARKGG. A compositionally biased stretch (polar residues) spans 406–418; it reads PTHSTVTASQGTP.

Belongs to the protein kinase superfamily. CAMK Ser/Thr protein kinase family. Mg(2+) is required as a cofactor.

It catalyses the reaction L-seryl-[protein] + ATP = O-phospho-L-seryl-[protein] + ADP + H(+). The catalysed reaction is L-threonyl-[protein] + ATP = O-phospho-L-threonyl-[protein] + ADP + H(+). May play a role in the response to environmental stress and cytokines. Appears to regulate translation by phosphorylating EIF4E, thus increasing the affinity of this protein for the 7-methylguanosine-containing mRNA cap. This chain is MAP kinase-interacting serine/threonine-protein kinase 1 (mknk1), found in Xenopus laevis (African clawed frog).